The chain runs to 130 residues: Histone H2A type 2-A (130 aa).

Positions 1–22 are disordered; it reads MSGRGKQGGKARAKAKSRSSRA. An N-acetylserine modification is found at Ser-2. Position 2 is a phosphoserine; by RPS6KA5 (Ser-2). Position 4 is a citrulline; alternate (Arg-4). At Arg-4 the chain carries Symmetric dimethylarginine; by PRMT5; alternate. 2 positions are modified to N6-(2-hydroxyisobutyryl)lysine; alternate: Lys-6 and Lys-10. Lys-6 is modified (N6-(beta-hydroxybutyryl)lysine; alternate). Position 6 is an N6-acetyllysine; alternate (Lys-6). Residues 7–19 are compositionally biased toward basic residues; the sequence is QGGKARAKAKSRS. Lys-10 carries the N6-lactoyllysine; alternate modification. Lys-10 carries the post-translational modification N6-succinyllysine; alternate. Glycyl lysine isopeptide (Lys-Gly) (interchain with G-Cter in ubiquitin) cross-links involve residues Lys-14 and Lys-16. An N6-(2-hydroxyisobutyryl)lysine; alternate modification is found at Lys-37. The residue at position 37 (Lys-37) is an N6-(beta-hydroxybutyryl)lysine; alternate. Lys-37 is modified (N6-crotonyllysine; alternate). 2 positions are modified to N6-(2-hydroxyisobutyryl)lysine: Lys-75 and Lys-76. At Lys-96 the chain carries N6-(2-hydroxyisobutyryl)lysine; alternate. Lys-96 carries the post-translational modification N6-succinyllysine; alternate. Residue Lys-96 is modified to N6-glutaryllysine; alternate. At Lys-100 the chain carries N6-glutaryllysine. N5-methylglutamine is present on Gln-105. The residue at position 119 (Lys-119) is an N6-(2-hydroxyisobutyryl)lysine; alternate. Lys-119 and Lys-120 each carry N6-crotonyllysine; alternate. Residues Lys-119 and Lys-120 each carry the N6-glutaryllysine; alternate modification. Lys-120 is modified (N6-(beta-hydroxybutyryl)lysine; alternate). A Glycyl lysine isopeptide (Lys-Gly) (interchain with G-Cter in ubiquitin); alternate cross-link involves residue Lys-120. A Phosphothreonine; by DCAF1 modification is found at Thr-121. Position 126 is an N6-(beta-hydroxybutyryl)lysine; alternate (Lys-126). An N6-crotonyllysine; alternate modification is found at Lys-126. Residue Lys-126 is modified to N6-glutaryllysine; alternate.

The protein belongs to the histone H2A family. As to quaternary structure, the nucleosome is a histone octamer containing two molecules each of H2A, H2B, H3 and H4 assembled in one H3-H4 heterotetramer and two H2A-H2B heterodimers. The octamer wraps approximately 147 bp of DNA. Deiminated on Arg-4 in granulocytes upon calcium entry. Post-translationally, monoubiquitination of Lys-120 (H2AK119Ub) by RING1, TRIM37 and RNF2/RING2 complex gives a specific tag for epigenetic transcriptional repression and participates in X chromosome inactivation of female mammals. It is involved in the initiation of both imprinted and random X inactivation. Ubiquitinated H2A is enriched in inactive X chromosome chromatin. Ubiquitination of H2A functions downstream of methylation of 'Lys-27' of histone H3 (H3K27me). H2AK119Ub by RNF2/RING2 can also be induced by ultraviolet and may be involved in DNA repair. Following DNA double-strand breaks (DSBs), it is ubiquitinated through 'Lys-63' linkage of ubiquitin moieties by the E2 ligase UBE2N and the E3 ligases RNF8 and RNF168, leading to the recruitment of repair proteins to sites of DNA damage. Ubiquitination at Lys-14 and Lys-16 (H2AK13Ub and H2AK15Ub, respectively) in response to DNA damage is initiated by RNF168 that mediates monoubiquitination at these 2 sites, and 'Lys-63'-linked ubiquitin are then conjugated to monoubiquitin; RNF8 is able to extend 'Lys-63'-linked ubiquitin chains in vitro. H2AK119Ub and ionizing radiation-induced 'Lys-63'-linked ubiquitination (H2AK13Ub and H2AK15Ub) are distinct events. In terms of processing, phosphorylation on Ser-2 (H2AS1ph) is enhanced during mitosis. Phosphorylation on Ser-2 by RPS6KA5/MSK1 directly represses transcription. Acetylation of H3 inhibits Ser-2 phosphorylation by RPS6KA5/MSK1. Phosphorylation at Thr-121 (H2AT120ph) by DCAF1 is present in the regulatory region of many tumor suppresor genes and down-regulates their transcription. Symmetric dimethylation on Arg-4 by the PRDM1/PRMT5 complex may play a crucial role in the germ-cell lineage. Post-translationally, glutamine methylation at Gln-105 (H2AQ104me) by FBL is specifically dedicated to polymerase I. It is present at 35S ribosomal DNA locus and impairs binding of the FACT complex. In terms of processing, crotonylation (Kcr) is specifically present in male germ cells and marks testis-specific genes in post-meiotic cells, including X-linked genes that escape sex chromosome inactivation in haploid cells. Crotonylation marks active promoters and enhancers and confers resistance to transcriptional repressors. It is also associated with post-meiotically activated genes on autosomes. Hydroxybutyrylation of histones is induced by starvation. Post-translationally, lactylated in macrophages by EP300/P300 by using lactoyl-CoA directly derived from endogenous or exogenous lactate, leading to stimulates gene transcription.

Its subcellular location is the nucleus. It localises to the chromosome. Its function is as follows. Core component of nucleosome. Nucleosomes wrap and compact DNA into chromatin, limiting DNA accessibility to the cellular machineries which require DNA as a template. Histones thereby play a central role in transcription regulation, DNA repair, DNA replication and chromosomal stability. DNA accessibility is regulated via a complex set of post-translational modifications of histones, also called histone code, and nucleosome remodeling. In Mus musculus (Mouse), this protein is Histone H2A type 2-A (Hist2h2aa1).